The chain runs to 433 residues: Serine--tRNA ligase (433 aa).

Residue 239 to 241 (TAE) coordinates L-serine. 270 to 272 (RSE) is a binding site for ATP. Glu293 is a binding site for L-serine. Position 357–360 (357–360 (EISS)) interacts with ATP. Residue Ser393 participates in L-serine binding.

The protein belongs to the class-II aminoacyl-tRNA synthetase family. Type-1 seryl-tRNA synthetase subfamily. In terms of assembly, homodimer. The tRNA molecule binds across the dimer.

The protein resides in the cytoplasm. The catalysed reaction is tRNA(Ser) + L-serine + ATP = L-seryl-tRNA(Ser) + AMP + diphosphate + H(+). It catalyses the reaction tRNA(Sec) + L-serine + ATP = L-seryl-tRNA(Sec) + AMP + diphosphate + H(+). The protein operates within aminoacyl-tRNA biosynthesis; selenocysteinyl-tRNA(Sec) biosynthesis; L-seryl-tRNA(Sec) from L-serine and tRNA(Sec): step 1/1. In terms of biological role, catalyzes the attachment of serine to tRNA(Ser). Is also able to aminoacylate tRNA(Sec) with serine, to form the misacylated tRNA L-seryl-tRNA(Sec), which will be further converted into selenocysteinyl-tRNA(Sec). The chain is Serine--tRNA ligase from Sorangium cellulosum (strain So ce56) (Polyangium cellulosum (strain So ce56)).